The following is a 278-amino-acid chain: Myb/SANT-like DNA-binding domain-containing protein 1 (278 aa).

The interval 1 to 27 is disordered; the sequence is MVRGAGPGPSLSALSHPTGASGMAAAE. The Myb-like domain occupies 44–129; the sequence is RNWTDAEMRG…PDWPYYLAID (86 aa). The interval 138–168 is disordered; the sequence is SCDGKLPDSQPPGPSTSQTEASLSPPAKSTP.

This Homo sapiens (Human) protein is Myb/SANT-like DNA-binding domain-containing protein 1 (MSANTD1).